The sequence spans 305 residues: Methionyl-tRNA formyltransferase (305 aa).

111 to 114 (SLLP) lines the (6S)-5,6,7,8-tetrahydrofolate pocket.

Belongs to the Fmt family.

The enzyme catalyses L-methionyl-tRNA(fMet) + (6R)-10-formyltetrahydrofolate = N-formyl-L-methionyl-tRNA(fMet) + (6S)-5,6,7,8-tetrahydrofolate + H(+). Its function is as follows. Attaches a formyl group to the free amino group of methionyl-tRNA(fMet). The formyl group appears to play a dual role in the initiator identity of N-formylmethionyl-tRNA by promoting its recognition by IF2 and preventing the misappropriation of this tRNA by the elongation apparatus. The protein is Methionyl-tRNA formyltransferase of Campylobacter jejuni subsp. jejuni serotype O:23/36 (strain 81-176).